We begin with the raw amino-acid sequence, 113 residues long: Class I hydrophobin fvh1 (113 aa).

An N-terminal signal peptide occupies residues Met1–Ala20. Disulfide bonds link Cys34/Cys94, Cys41/Cys88, Cys42/Cys75, and Cys95/Cys108. Residue Asn35 is glycosylated (N-linked (GlcNAc...) asparagine). N-linked (GlcNAc...) asparagine glycosylation occurs at Asn97.

It belongs to the fungal hydrophobin family. As to quaternary structure, self-assembles to form functional amyloid fibrils called rodlets. Self-assembly into fibrillar rodlets occurs spontaneously at hydrophobic:hydrophilic interfaces and the rodlets further associate laterally to form amphipathic monolayers.

Its subcellular location is the secreted. The protein localises to the cell wall. In terms of biological role, aerial growth, conidiation, and dispersal of filamentous fungi in the environment rely upon a capability of their secreting small amphipathic proteins called hydrophobins (HPBs) with low sequence identity. Class I can self-assemble into an outermost layer of rodlet bundles on aerial cell surfaces, conferring cellular hydrophobicity that supports fungal growth, development and dispersal; whereas Class II form highly ordered films at water-air interfaces through intermolecular interactions but contribute nothing to the rodlet structure. Fvh1 is a class I hydrophobin involved in fruiting body initiation. This chain is Class I hydrophobin fvh1, found in Flammulina velutipes (Agaricus velutipes).